The sequence spans 548 residues: DNA-binding protein REPIN1 (548 aa).

The segment at 1-47 (MLERRCRGPTAMGPAHPWLFSGPSQESSQPNRGLRYQGKSVAQPGGP) is disordered. A compositionally biased stretch (polar residues) spans 22-31 (GPSQESSQPN). Ser27 bears the Phosphoserine mark. Residue Lys39 is modified to N6-acetyllysine. Residues 53-75 (HRCAHCRKRFPGWVALWLHTRRC) form a C2H2-type 1; atypical zinc finger. 2 C2H2-type zinc fingers span residues 81 to 103 (LPCH…LQVH) and 112 to 134 (FICH…LRAH). The C2H2-type 4; atypical zinc-finger motif lies at 141–163 (ITCPECNKRFWRQKQLRAHLRRC). 11 consecutive C2H2-type zinc fingers follow at residues 173–195 (FICG…KRVH), 232–254 (FQCA…RRVH), 260–282 (HQCP…RRIH), 288–310 (YPCT…SKIH), 356–378 (HSCT…QRQH), 384–406 (FTCT…SRVH), 412–434 (FACE…RRDH), 440–462 (FVCP…RRIH), 468–490 (YVCP…RRIH), 496–518 (YACP…RKSH), and 524–546 (FCCA…QKKH). Lys272 carries the N6-acetyllysine modification.

In terms of assembly, homodimers and homomultimers. Found in a complex with RIP60 and RIP100. As to expression, expressed in the liver and in subcutaneous and visceral adipose tissue.

It localises to the nucleus. It is found in the cytoplasm. The protein localises to the cytosol. Sequence-specific double-stranded DNA-binding protein. Binds ATT-rich and T-rich DNA sequences and facilitates DNA bending. May regulate the expression of genes involved in cellular fatty acid import, including SCARB1/CD36, and genes involved in lipid droplet formation. May regulate the expression of LCN2, and thereby influence iron metabolism and apoptosis-related pathways. May regulate the expression of genes involved in glucose transport. This Rattus norvegicus (Rat) protein is DNA-binding protein REPIN1 (Repin1).